Here is a 581-residue protein sequence, read N- to C-terminus: MGFNVIRLLSGSAVALVIAPTVLLTMLSSAERGCPKGCRCEGKMVYCESQKLQEIPSSISAGCLGLSLRYNSLQKLKYNQFKGLNQLTWLYLDHNHISNIDENAFNGIRRLKELILSSNRISYFLNNTFRPVTNLRNLDLSYNQLHSLGSEQFRGLRKLLSLHLRSNSLRTIPVRIFQDCRNLELLDLGYNRIRSLARNVFAGMIRLKELHLEHNQFSKLNLALFPRLVSLQNLYLQWNKISVIGQTMSWTWSSLQRLDLSGNEIEAFSGPSVFQCVPNLQRLNLDSNKLTFIGQEILDSWISLNDISLAGNIWECSRNICSLVNWLKSFKGLRENTIICASPKELQGVNVIDAVKNYSICGKSTTERFDLARALPKPTFKPKLPRPKHESKPPLPPTVGATEPGPETDADAEHISFHKIIAGSVALFLSVLVILLVIYVSWKRYPASMKQLQQRSLMRRHRKKKRQSLKQMTPSTQEFYVDYKPTNTETSEMLLNGTGPCTYNKSGSRECEIPLSMNVSTFLAYDQPTISYCGVHHELLSHKSFETNAQEDTMETHLETELDLSTITTAGRISDHKQQLA.

The N-terminal stretch at 1-30 is a signal peptide; sequence MGFNVIRLLSGSAVALVIAPTVLLTMLSSA. The LRRNT domain occupies 31-61; it reads ERGCPKGCRCEGKMVYCESQKLQEIPSSISA. Topologically, residues 31–419 are extracellular; the sequence is ERGCPKGCRC…ADAEHISFHK (389 aa). LRR repeat units lie at residues 63-83, 86-107, 110-131, 134-155, 158-179, 182-203, 206-226, 230-251, 254-275, and 279-300; these read CLGLSLRYNSLQKLKYNQFKG, QLTWLYLDHNHISNIDENAFNG, RLKELILSSNRISYFLNNTFRP, NLRNLDLSYNQLHSLGSEQFRG, KLLSLHLRSNSLRTIPVRIFQD, NLELLDLGYNRIRSLARNVFAG, RLKELHLEHNQFSKLNLALFP, SLQNLYLQWNKISVIGQTMSWT, SLQRLDLSGNEIEAFSGPSVFQ, and NLQRLNLDSNKLTFIGQEILDS. N-linked (GlcNAc...) asparagine glycosylation occurs at asparagine 126. Residues 312-363 form the LRRCT domain; the sequence is NIWECSRNICSLVNWLKSFKGLRENTIICASPKELQGVNVIDAVKNYSICGK. N-linked (GlcNAc...) asparagine glycosylation occurs at asparagine 357. The interval 377–408 is disordered; the sequence is KPTFKPKLPRPKHESKPPLPPTVGATEPGPET. A helical transmembrane segment spans residues 420 to 440; that stretch reads IIAGSVALFLSVLVILLVIYV. The Cytoplasmic segment spans residues 441–581; the sequence is SWKRYPASMK…RISDHKQQLA (141 aa).

This sequence belongs to the LRRTM family. As to expression, expressed in neuronal tissues.

It is found in the cell membrane. Its subcellular location is the postsynaptic cell membrane. Exhibits a limited synaptogenic activity in vitro, restricted to excitatory presynaptic differentiation. May play a role in the development and maintenance of the vertebrate nervous system. In Homo sapiens (Human), this protein is Leucine-rich repeat transmembrane neuronal protein 3 (LRRTM3).